A 55-amino-acid polypeptide reads, in one-letter code: uncharacterized protein (55 aa).

The helical transmembrane segment at 24–46 threads the bilayer; sequence LFIIFFTYSYYYCGFLQSFNYII.

The protein resides in the membrane. This is an uncharacterized protein from Dictyostelium discoideum (Social amoeba).